The chain runs to 141 residues: Transcriptional regulator MraZ (141 aa).

SpoVT-AbrB domains follow at residues 5–47 and 76–119; these read TFNL…KPAD and ANLV…DKVQ.

The protein belongs to the MraZ family. Forms oligomers.

It localises to the cytoplasm. The protein resides in the nucleoid. This chain is Transcriptional regulator MraZ, found in Mycoplasma genitalium (strain ATCC 33530 / DSM 19775 / NCTC 10195 / G37) (Mycoplasmoides genitalium).